Here is a 188-residue protein sequence, read N- to C-terminus: Adenine phosphoribosyltransferase (188 aa).

The protein belongs to the purine/pyrimidine phosphoribosyltransferase family. Homodimer.

It localises to the cytoplasm. It carries out the reaction AMP + diphosphate = 5-phospho-alpha-D-ribose 1-diphosphate + adenine. It functions in the pathway purine metabolism; AMP biosynthesis via salvage pathway; AMP from adenine: step 1/1. Catalyzes a salvage reaction resulting in the formation of AMP, that is energically less costly than de novo synthesis. The chain is Adenine phosphoribosyltransferase from Neisseria meningitidis serogroup B (strain ATCC BAA-335 / MC58).